Reading from the N-terminus, the 242-residue chain is UPF0309 protein BH3325 (242 aa).

The SIS domain occupies 34–217 (VSEAVMNGGR…HLLVQQGFEP (184 aa)).

It belongs to the UPF0309 family.

The protein is UPF0309 protein BH3325 of Halalkalibacterium halodurans (strain ATCC BAA-125 / DSM 18197 / FERM 7344 / JCM 9153 / C-125) (Bacillus halodurans).